The chain runs to 217 residues: MKIVIADDHAVVRTGFSMILNFQDDMEVVDTAADGVEAYQKVMQHQPDVLIMDLSMPPGESGLIATSKIVESFPDTKILILTMYDDEEYLFHVLRNGAKGYILKNAPDEQLISAVRTVYRGDTYIDPKMTTSLVNEFVNNTGQDANSTNDPFRILSKRELEILPLIAKGYGNKEIAEKLFVSVKTVEAHKTHIMQKLNLKSKPELVEYALKKKLLDF.

One can recognise a Response regulatory domain in the interval 2–119 (KIVIADDHAV…QLISAVRTVY (118 aa)). Asp-53 carries the 4-aspartylphosphate modification. An HTH luxR-type domain is found at 148–213 (TNDPFRILSK…ELVEYALKKK (66 aa)). Residues 172–191 (NKEIAEKLFVSVKTVEAHKT) constitute a DNA-binding region (H-T-H motif).

Phosphorylated by NreB.

It is found in the cytoplasm. In terms of biological role, member of the two-component regulatory system NreB/NreC involved in the control of dissimilatory nitrate/nitrite reduction in response to oxygen. Phosphorylated NreC binds to a GC-rich palindromic sequence at the promoters of the nitrate (narGHJI) and nitrite (nir) reductase operons, as well as the putative nitrate transporter gene narT, and activates their expression. This chain is Oxygen regulatory protein NreC (nreC), found in Staphylococcus carnosus (strain TM300).